Reading from the N-terminus, the 85-residue chain is UPF0473 protein CLK_1946 (85 aa).

The protein belongs to the UPF0473 family.

The polypeptide is UPF0473 protein CLK_1946 (Clostridium botulinum (strain Loch Maree / Type A3)).